We begin with the raw amino-acid sequence, 292 residues long: tRNA dimethylallyltransferase (292 aa).

10-17 contacts ATP; that stretch reads GPTASGKS. A substrate-binding site is contributed by 12 to 17; it reads TASGKS. Interaction with substrate tRNA regions lie at residues 35 to 38 and 159 to 163; these read DSMQ and QRIVR.

It belongs to the IPP transferase family. Monomer. Requires Mg(2+) as cofactor.

The catalysed reaction is adenosine(37) in tRNA + dimethylallyl diphosphate = N(6)-dimethylallyladenosine(37) in tRNA + diphosphate. In terms of biological role, catalyzes the transfer of a dimethylallyl group onto the adenine at position 37 in tRNAs that read codons beginning with uridine, leading to the formation of N6-(dimethylallyl)adenosine (i(6)A). This Chelativorans sp. (strain BNC1) protein is tRNA dimethylallyltransferase.